We begin with the raw amino-acid sequence, 301 residues long: Tyrosine recombinase XerC (301 aa).

A Core-binding (CB) domain is found at 1 to 85 (MELISLFKQY…ALRSFYRFLV (85 aa)). A Tyr recombinase domain is found at 106–292 (KLPHFFYEKE…TKEKLQESYR (187 aa)). Residues R147, K171, H244, R247, and H270 contribute to the active site. Catalysis depends on Y279, which acts as the O-(3'-phospho-DNA)-tyrosine intermediate.

It belongs to the 'phage' integrase family. XerC subfamily. Forms a cyclic heterotetrameric complex composed of two molecules of XerC and two molecules of XerD.

Its subcellular location is the cytoplasm. Site-specific tyrosine recombinase, which acts by catalyzing the cutting and rejoining of the recombining DNA molecules. The XerC-XerD complex is essential to convert dimers of the bacterial chromosome into monomers to permit their segregation at cell division. It also contributes to the segregational stability of plasmids. The protein is Tyrosine recombinase XerC of Pediococcus pentosaceus (strain ATCC 25745 / CCUG 21536 / LMG 10740 / 183-1w).